We begin with the raw amino-acid sequence, 359 residues long: MRKIVHVDMDAFYASVEQRDDPGLRGKPVVVAWRGARSVVCAASYEARTFGIRSAMPAVRAERLCPNAIFVPPDFVRYKAVSRQVREIFHRHTDLVEPLSLDEAYLDVTQAKTGMQLATEIAQLIRTQIREETELTASAGIAPNKFLAKIASDWRKPDGQFVIAPSRIDAFLLPLKVNRIPGVGKVMDGKLAALGIVTVADLRLRPLEELQAHFGSFGQSLYRRARGIDERPVEPDQDVQSVSSEDTFSEDLALDALDTHILRLAEKTWLATRRTERIGRTVVLKLKTSNFRILTRSCTPEQPPVSQEALAQIALALTRRVELPAQTRYRLVGVGLSGFSNVEEGAVQGQLFGEIPQAE.

The region spanning 4 to 184 (IVHVDMDAFY…LKVNRIPGVG (181 aa)) is the UmuC domain. 2 residues coordinate Mg(2+): Asp8 and Asp102. Glu103 is an active-site residue.

It belongs to the DNA polymerase type-Y family. Monomer. Requires Mg(2+) as cofactor.

Its subcellular location is the cytoplasm. The enzyme catalyses DNA(n) + a 2'-deoxyribonucleoside 5'-triphosphate = DNA(n+1) + diphosphate. Its function is as follows. Poorly processive, error-prone DNA polymerase involved in untargeted mutagenesis. Copies undamaged DNA at stalled replication forks, which arise in vivo from mismatched or misaligned primer ends. These misaligned primers can be extended by PolIV. Exhibits no 3'-5' exonuclease (proofreading) activity. May be involved in translesional synthesis, in conjunction with the beta clamp from PolIII. This Xanthomonas oryzae pv. oryzae (strain MAFF 311018) protein is DNA polymerase IV.